The primary structure comprises 65 residues: Large ribosomal subunit protein bL35 (65 aa).

This sequence belongs to the bacterial ribosomal protein bL35 family.

In Yersinia enterocolitica serotype O:8 / biotype 1B (strain NCTC 13174 / 8081), this protein is Large ribosomal subunit protein bL35.